The primary structure comprises 635 residues: Protein OPG056 (635 aa).

Belongs to the orthopoxvirus OPG056 family. Interacts with protein OPG164/A36. Interacts with protein OPG064/E2.

The protein localises to the virion membrane. The protein resides in the host endosome. Its function is as follows. Plays a role in intracellular enveloped virus (IEV) transport to the cell surface through microtubule transport. Together with protein OPG064/E2, forms a complex that interacts with host KLC2 (kinesin light chain isoform 2) to engage the kinesin-1 complex and thereby promote IEV trafficking. In Vaccinia virus (strain Western Reserve) (VACV), this protein is Protein OPG056 (OPG056).